The sequence spans 142 residues: Hemoglobin subunit alpha-1/2 (142 aa).

The region spanning 2–142 (VLSPADKTNI…VSTVLTSKYR (141 aa)) is the Globin domain. Ser4 carries the phosphoserine modification. Position 8 is an N6-succinyllysine (Lys8). The residue at position 9 (Thr9) is a Phosphothreonine. Lys12 carries the post-translational modification N6-succinyllysine. Position 17 is an N6-acetyllysine; alternate (Lys17). An N6-succinyllysine; alternate modification is found at Lys17. Tyr25 bears the Phosphotyrosine mark. N6-succinyllysine is present on Lys41. His59 is a binding site for O2. His88 is a binding site for heme b. Ser103 carries the phosphoserine modification. Position 109 is a phosphothreonine (Thr109). Ser125 carries the post-translational modification Phosphoserine. A phosphothreonine mark is found at Thr135 and Thr138. Ser139 carries the post-translational modification Phosphoserine.

The protein belongs to the globin family. As to quaternary structure, heterotetramer of two alpha chains and two beta chains. Red blood cells.

Functionally, involved in oxygen transport from the lung to the various peripheral tissues. The protein is Hemoglobin subunit alpha-1/2 of Oryctolagus cuniculus (Rabbit).